We begin with the raw amino-acid sequence, 88 residues long: Conotoxin MaIr34 (88 aa).

Positions 1 to 21 (MKLTCVIVAVLFLTAWTFVMA) are cleaved as a signal peptide. Residues 22–53 (DDPRDGPDTAVRGGKRFWKARNEMNSAASKLN) constitute a propeptide that is removed on maturation. 3 disulfides stabilise this stretch: C57–C75, C64–C79, and C74–C83.

It belongs to the conotoxin O1 superfamily. Expressed by the venom duct.

Its subcellular location is the secreted. The chain is Conotoxin MaIr34 from Conus marmoreus (Marble cone).